Consider the following 235-residue polypeptide: Purine nucleoside phosphorylase DeoD-type (235 aa).

Histidine 4 lines the a purine D-ribonucleoside pocket. Residues glycine 20, arginine 24, arginine 43, and 87–90 (RVGT) each bind phosphate. A purine D-ribonucleoside contacts are provided by residues 179–181 (EME) and 203–204 (SD). Aspartate 204 (proton donor) is an active-site residue.

It belongs to the PNP/UDP phosphorylase family. As to quaternary structure, homohexamer; trimer of homodimers.

The enzyme catalyses a purine D-ribonucleoside + phosphate = a purine nucleobase + alpha-D-ribose 1-phosphate. It catalyses the reaction a purine 2'-deoxy-D-ribonucleoside + phosphate = a purine nucleobase + 2-deoxy-alpha-D-ribose 1-phosphate. Functionally, catalyzes the reversible phosphorolytic breakdown of the N-glycosidic bond in the beta-(deoxy)ribonucleoside molecules, with the formation of the corresponding free purine bases and pentose-1-phosphate. This Clostridium perfringens (strain SM101 / Type A) protein is Purine nucleoside phosphorylase DeoD-type.